Consider the following 328-residue polypeptide: Lateral signaling target 1 protein (328 aa).

3 disordered regions span residues 56 to 78 (SSQD…GLRS), 108 to 135 (PTHY…SASS), and 177 to 200 (PVQP…RLNG). The segment covering 178 to 200 (VQPSTSTSRNNVSQISGSSRLNG) has biased composition (polar residues).

Interacts with fbf-2; the interaction probably mediates the release of the C-terminal tail of fbf-2 from the RNA-binding domain, thereby altering its RNA-binding affinity.

Plays a role in germline stem cell maintenance, perhaps acting in concert with mRNA-binding factor fbf-2. May regulate fbf-2 by modulating RNA-binding and perhaps by competition with the intramolecular interaction between the fbf-2 RNA-binding domain and C-terminal tail. The polypeptide is Lateral signaling target 1 protein (Caenorhabditis elegans).